We begin with the raw amino-acid sequence, 246 residues long: Probable phosphatase Tola_0828 (246 aa).

Residues H8, H10, H16, H41, E74, H102, H132, D193, and H195 each coordinate Zn(2+).

This sequence belongs to the PHP family. It depends on Zn(2+) as a cofactor.

The protein is Probable phosphatase Tola_0828 of Tolumonas auensis (strain DSM 9187 / NBRC 110442 / TA 4).